The sequence spans 395 residues: Phosphoprotein (395 aa).

3 disordered regions span residues 34 to 104, 126 to 179, and 192 to 214; these read VGRS…ADEA, NKSS…GTDA, and LSAGATHHALRSGQSQDNTPAPV. Over residues 65-74 the composition is skewed to basic and acidic residues; the sequence is TPDRQDRSDK. Composition is skewed to polar residues over residues 89–98 and 147–178; these read PATSTDQPPT and PTQQQGSQPSRGNSQERPQNQVKAAPGSQGTD. Positions 222–285 are multimerization; that stretch reads DFVQAMMSMM…LGMMKILDPG (64 aa).

It belongs to the rubulavirus/avulavirus P protein family. As to quaternary structure, homotetramer. Interacts (via multimerization domain) with polymerase L; this interaction forms the polymerase L-P complex. Interacts (via N-terminus) with N0 (via Ncore); this interaction allows P to chaperon N0 to avoid N polymerization before encapsidation. Interacts (via C-terminus) with N-RNA template; this interaction positions the polymerase on the template for both transcription and replication.

In terms of biological role, essential cofactor of the RNA polymerase L that plays a central role in the transcription and replication by forming the polymerase complex with RNA polymerase L and recruiting L to the genomic N-RNA template for RNA synthesis. Also plays a central role in the encapsidation of nascent RNA chains by forming the encapsidation complex with the nucleocapsid protein N (N-P complex). Acts as a chaperone for newly synthesized free N protein, so-called N0, allowing encapsidation of nascent RNA chains during replication. The nucleoprotein protein N prevents excessive phosphorylation of P, which leads to down-regulation of viral transcription/ replication. Participates, together with N, in the formation of viral factories (viroplasms), which are large inclusions in the host cytoplasm where replication takes place. This chain is Phosphoprotein (P/V), found in Newcastle disease virus (strain Ulster/2C) (NDV).